We begin with the raw amino-acid sequence, 618 residues long: UvrABC system protein C (618 aa).

In terms of domain architecture, GIY-YIG spans Thr20–Val98. The 36-residue stretch at Asp207–Met242 folds into the UVR domain.

It belongs to the UvrC family. As to quaternary structure, interacts with UvrB in an incision complex.

It is found in the cytoplasm. The UvrABC repair system catalyzes the recognition and processing of DNA lesions. UvrC both incises the 5' and 3' sides of the lesion. The N-terminal half is responsible for the 3' incision and the C-terminal half is responsible for the 5' incision. In Xanthomonas oryzae pv. oryzae (strain MAFF 311018), this protein is UvrABC system protein C.